We begin with the raw amino-acid sequence, 513 residues long: uncharacterized protein (513 aa).

The 209-residue stretch at 11 to 219 folds into the CYTH domain; the sequence is HLEVERKFDV…SKLARVLGAT (209 aa). A CHAD domain is found at 228–506; it reads PQPPADPVHR…LEAALRKLDK (279 aa).

This is an uncharacterized protein from Mycobacterium tuberculosis (strain ATCC 25618 / H37Rv).